Consider the following 294-residue polypeptide: Phosphatidylglycerol--prolipoprotein diacylglyceryl transferase (294 aa).

A run of 7 helical transmembrane segments spans residues 10-30, 55-75, 91-111, 119-139, 196-216, 224-244, and 258-278; these read VALA…LLAF, LVFY…VLFY, WEGG…MWFF, AFQV…FGRI, PSQL…LWWY, MAAS…IEFF, and WMTK…IMLI. R138 lines the a 1,2-diacyl-sn-glycero-3-phospho-(1'-sn-glycerol) pocket.

Belongs to the Lgt family.

The protein localises to the cell inner membrane. The enzyme catalyses L-cysteinyl-[prolipoprotein] + a 1,2-diacyl-sn-glycero-3-phospho-(1'-sn-glycerol) = an S-1,2-diacyl-sn-glyceryl-L-cysteinyl-[prolipoprotein] + sn-glycerol 1-phosphate + H(+). The protein operates within protein modification; lipoprotein biosynthesis (diacylglyceryl transfer). Its function is as follows. Catalyzes the transfer of the diacylglyceryl group from phosphatidylglycerol to the sulfhydryl group of the N-terminal cysteine of a prolipoprotein, the first step in the formation of mature lipoproteins. The sequence is that of Phosphatidylglycerol--prolipoprotein diacylglyceryl transferase from Psychrobacter arcticus (strain DSM 17307 / VKM B-2377 / 273-4).